Here is a 118-residue protein sequence, read N- to C-terminus: Holo-[acyl-carrier-protein] synthase (118 aa).

Mg(2+)-binding residues include Asp-8 and Glu-58.

This sequence belongs to the P-Pant transferase superfamily. AcpS family. Mg(2+) serves as cofactor.

Its subcellular location is the cytoplasm. It catalyses the reaction apo-[ACP] + CoA = holo-[ACP] + adenosine 3',5'-bisphosphate + H(+). Functionally, transfers the 4'-phosphopantetheine moiety from coenzyme A to a Ser of acyl-carrier-protein. This is Holo-[acyl-carrier-protein] synthase from Listeria innocua serovar 6a (strain ATCC BAA-680 / CLIP 11262).